A 542-amino-acid polypeptide reads, in one-letter code: Anaerobic glycerol-3-phosphate dehydrogenase subunit A (542 aa).

10–38 (DVIIIGGGATGAGIARDCALRGLRVILVE) contacts FAD.

This sequence belongs to the FAD-dependent glycerol-3-phosphate dehydrogenase family. As to quaternary structure, composed of a catalytic GlpA/B dimer and of membrane bound GlpC. The cofactor is FAD. Requires FMN as cofactor.

The protein localises to the cell inner membrane. It carries out the reaction a quinone + sn-glycerol 3-phosphate = dihydroxyacetone phosphate + a quinol. It functions in the pathway polyol metabolism; glycerol degradation via glycerol kinase pathway; glycerone phosphate from sn-glycerol 3-phosphate (anaerobic route): step 1/1. Functionally, conversion of glycerol 3-phosphate to dihydroxyacetone. Uses fumarate or nitrate as electron acceptor. This chain is Anaerobic glycerol-3-phosphate dehydrogenase subunit A (glpA), found in Escherichia coli O157:H7.